The chain runs to 102 residues: NADH-quinone oxidoreductase subunit K (102 aa).

The next 3 membrane-spanning stretches (helical) occupy residues 5–25, 31–51, and 62–82; these read LGHF…GIFL, IVLL…FVAF, and IFVF…LAIL.

It belongs to the complex I subunit 4L family. As to quaternary structure, NDH-1 is composed of 14 different subunits. Subunits NuoA, H, J, K, L, M, N constitute the membrane sector of the complex.

It is found in the cell inner membrane. It carries out the reaction a quinone + NADH + 5 H(+)(in) = a quinol + NAD(+) + 4 H(+)(out). Its function is as follows. NDH-1 shuttles electrons from NADH, via FMN and iron-sulfur (Fe-S) centers, to quinones in the respiratory chain. The immediate electron acceptor for the enzyme in this species is believed to be ubiquinone. Couples the redox reaction to proton translocation (for every two electrons transferred, four hydrogen ions are translocated across the cytoplasmic membrane), and thus conserves the redox energy in a proton gradient. This chain is NADH-quinone oxidoreductase subunit K, found in Albidiferax ferrireducens (strain ATCC BAA-621 / DSM 15236 / T118) (Rhodoferax ferrireducens).